The following is a 420-amino-acid chain: MATSLGSNTYNRQNWEDADFPILCQTCLGENPYIRMTKEKYGKECKICARPFTVFRWCPGVRMRFKKTEVCQTCSKLKNVCQTCLLDLEYGLPIQVRDAGLSFKDDMPKSDVNKEYYTQNMEREISNSDGTRPVGMLGKATSTSDMLLKLARTTPYYKRNRPHICSFWVKGECKRGEECPYRHEKPTDPDDPLADQNIKDRYYGINDPVADKLLKRASTMPRLDPPEDKTITTLYVGGLGDTITETDLRNHFYQFGEIRTITVVQRQQCAFIQFATRQAAEVAAEKSFNKFIVNGRRLNVKWGRSQAARGKEKEKDGTTDSGIKLEPVPGLPGALPPPPAAEEEASANYFNLPPSGPPAVVNIALPPPPGIAPPPPPGFGPHMFHPMGPPPPFMRAPGPIHYPSQDPQRMGAHAGKHSSP.

Alanine 2 is subject to N-acetylalanine. Serine 4 and serine 102 each carry phosphoserine. Glycyl lysine isopeptide (Lys-Gly) (interchain with G-Cter in SUMO2) cross-links involve residues lysine 139 and lysine 149. A C3H1-type zinc finger spans residues 159–186 (RNRPHICSFWVKGECKRGEECPYRHEKP). An N6-acetyllysine modification is found at lysine 212. One can recognise an RRM domain in the interval 232 to 305 (TTLYVGGLGD…RRLNVKWGRS (74 aa)). Lysine 290 participates in a covalent cross-link: Glycyl lysine isopeptide (Lys-Gly) (interchain with G-Cter in SUMO2). Disordered regions lie at residues 303–343 (GRSQ…AAEE) and 372–420 (APPP…HSSP). Positions 309–318 (RGKEKEKDGT) are enriched in basic and acidic residues.

It belongs to the SLT11 family. In terms of assembly, component of the pre-catalytic and catalytic spliceosome complexes. Component of the postcatalytic spliceosome P complex. Interacts with PDCD6; the interaction induces translocation of PDCD6 in the cytoplasm. Interacts with PPIL1.

The protein localises to the nucleus. The protein resides in the cytoplasm. Its function is as follows. Required for pre-mRNA splicing as component of the activated spliceosome. Involved in the first step of pre-mRNA splicing. Binds directly to the internal stem-loop (ISL) domain of the U6 snRNA and to the pre-mRNA intron near the 5' splice site during the activation and catalytic phases of the spliceosome cycle. Involved in both translocations of the nuclear SLU7 to the cytoplasm and the cytosolic calcium-binding protein PDCD6 to the nucleus upon cellular stress responses. This chain is Pre-mRNA-splicing factor RBM22 (RBM22), found in Bos taurus (Bovine).